We begin with the raw amino-acid sequence, 626 residues long: Division abnormally delayed protein (626 aa).

An N-terminal signal peptide occupies residues M1–A26. Basic residues predominate over residues L41–L52. A disordered region spans residues L41–S65. A glycan (N-linked (GlcNAc...) asparagine; atypical) is linked at N97. Residues N101, N150, and N187 are each glycosylated (N-linked (GlcNAc...) asparagine). The interval N533–E607 is disordered. O-linked (Xyl...) (heparan sulfate) serine glycosylation is found at S549, S569, S573, and S601. The segment covering G565–D575 has biased composition (gly residues). G602 carries GPI-anchor amidated glycine lipidation. Residues S603–S626 constitute a propeptide, removed in mature form.

Belongs to the glypican family. As to quaternary structure, interacts with nord; the interaction promotes dally degradation. Interacts with Magu. As part of the dally/ Magu complex, associates with fwe (isoforms ubi, LoseA and LoseB) and is unable to interact with fwe independently of Magu.

The protein resides in the cell membrane. Functionally, cell surface proteoglycan that bears heparan sulfate. Functions as a coreceptor for growth factors and morphogens, such as the products of dpp, to regulate signaling and distribution of these ligands. Required for cell division patterning during postembryonic development of the nervous system. Plays a role in dpp/BMP signaling possibly by stabilizing dpp and thereby creating a morphological gradient during wing development. Might have a role in testis development. Functions with magu and fwe in a mechanism of scaling, which utilises apoptosis to ensure that the dpp patterning gradient remains proportional to the size of the growing wing. In this mechanism, fwe represses dally and Magu-dependent activity in expanding the gradient, and dally/Magu inhibits fwe-dependent apoptosis to keep cell death rate low. When the levels of these different proteins are optimally regulated the gradient correctly scales with organ growth but when this fails, fwe-mediated apoptosis is activated to trim the developing tissue to match the correct size of the gradient. The chain is Division abnormally delayed protein (dally) from Drosophila melanogaster (Fruit fly).